Here is a 122-residue protein sequence, read N- to C-terminus: Large ribosomal subunit protein uL14 (122 aa).

It belongs to the universal ribosomal protein uL14 family. As to quaternary structure, part of the 50S ribosomal subunit. Forms a cluster with proteins L3 and L19. In the 70S ribosome, L14 and L19 interact and together make contacts with the 16S rRNA in bridges B5 and B8.

Binds to 23S rRNA. Forms part of two intersubunit bridges in the 70S ribosome. The protein is Large ribosomal subunit protein uL14 of Clostridioides difficile (strain 630) (Peptoclostridium difficile).